A 329-amino-acid chain; its full sequence is L-lactate dehydrogenase (329 aa).

Residues valine 18, glutamate 39, lysine 46, tyrosine 71, and 85–86 contribute to the NAD(+) site; that span reads GA. Positions 88 and 94 each coordinate substrate. NAD(+) is bound by residues serine 107, 124–126, and serine 149; that span reads AAN. A substrate-binding site is contributed by 126–129; it reads NPVD. 154–157 is a substrate binding site; that stretch reads DSAR. Positions 159 and 174 each coordinate beta-D-fructose 1,6-bisphosphate. Catalysis depends on histidine 181, which acts as the Proton acceptor. Tyrosine 226 carries the post-translational modification Phosphotyrosine. Threonine 235 is a binding site for substrate.

The protein belongs to the LDH/MDH superfamily. LDH family. As to quaternary structure, homotetramer.

It localises to the cytoplasm. It catalyses the reaction (S)-lactate + NAD(+) = pyruvate + NADH + H(+). It functions in the pathway fermentation; pyruvate fermentation to lactate; (S)-lactate from pyruvate: step 1/1. Its activity is regulated as follows. Allosterically activated by fructose 1,6-bisphosphate (FBP). Functionally, catalyzes the conversion of lactate to pyruvate. The protein is L-lactate dehydrogenase of Streptococcus equinus (Streptococcus bovis).